The sequence spans 187 residues: MKKLALFALLMVPAILLASGHDSGEASRYLTQTGRESDFWPRVINFTIFAAILYYLIANPIKNFFKGRREGIAGQLKEIESKLQAAKDEKKEAQSHLNESVNKAAEIIEDAKKEAEILAAKIAEASENELVVLEKQFEEKITLEERKAARDVIDEVLSENITTDDIALDETKVVDIISRKAEHGKVA.

The chain crosses the membrane as a helical span at residues 4-24 (LALFALLMVPAILLASGHDSG).

This sequence belongs to the ATPase B chain family. F-type ATPases have 2 components, F(1) - the catalytic core - and F(0) - the membrane proton channel. F(1) has five subunits: alpha(3), beta(3), gamma(1), delta(1), epsilon(1). F(0) has three main subunits: a(1), b(2) and c(10-14). The alpha and beta chains form an alternating ring which encloses part of the gamma chain. F(1) is attached to F(0) by a central stalk formed by the gamma and epsilon chains, while a peripheral stalk is formed by the delta and b chains.

It is found in the cell inner membrane. In terms of biological role, f(1)F(0) ATP synthase produces ATP from ADP in the presence of a proton or sodium gradient. F-type ATPases consist of two structural domains, F(1) containing the extramembraneous catalytic core and F(0) containing the membrane proton channel, linked together by a central stalk and a peripheral stalk. During catalysis, ATP synthesis in the catalytic domain of F(1) is coupled via a rotary mechanism of the central stalk subunits to proton translocation. Functionally, component of the F(0) channel, it forms part of the peripheral stalk, linking F(1) to F(0). The protein is ATP synthase subunit b of Sulfurovum sp. (strain NBC37-1).